The chain runs to 870 residues: DNA mismatch repair protein MutS (870 aa).

G616–S623 is an ATP binding site.

The protein belongs to the DNA mismatch repair MutS family.

In terms of biological role, this protein is involved in the repair of mismatches in DNA. It is possible that it carries out the mismatch recognition step. This protein has a weak ATPase activity. The polypeptide is DNA mismatch repair protein MutS (Parabacteroides distasonis (strain ATCC 8503 / DSM 20701 / CIP 104284 / JCM 5825 / NCTC 11152)).